The chain runs to 439 residues: Ribosomal protein uS12 methylthiotransferase RimO (439 aa).

The MTTase N-terminal domain maps to K3–P118. Residues C12, C48, C81, C157, C161, and C164 each contribute to the [4Fe-4S] cluster site. The Radical SAM core domain occupies N143–E370. Residues E373–S438 form the TRAM domain.

Belongs to the methylthiotransferase family. RimO subfamily. [4Fe-4S] cluster is required as a cofactor.

It localises to the cytoplasm. It carries out the reaction L-aspartate(89)-[ribosomal protein uS12]-hydrogen + (sulfur carrier)-SH + AH2 + 2 S-adenosyl-L-methionine = 3-methylsulfanyl-L-aspartate(89)-[ribosomal protein uS12]-hydrogen + (sulfur carrier)-H + 5'-deoxyadenosine + L-methionine + A + S-adenosyl-L-homocysteine + 2 H(+). In terms of biological role, catalyzes the methylthiolation of an aspartic acid residue of ribosomal protein uS12. This Leptospira borgpetersenii serovar Hardjo-bovis (strain L550) protein is Ribosomal protein uS12 methylthiotransferase RimO.